Here is a 249-residue protein sequence, read N- to C-terminus: Ribonuclease PH (249 aa).

Phosphate contacts are provided by residues Arg-86 and Gly-124–Arg-126.

Belongs to the RNase PH family. Homohexameric ring arranged as a trimer of dimers.

It carries out the reaction tRNA(n+1) + phosphate = tRNA(n) + a ribonucleoside 5'-diphosphate. In terms of biological role, phosphorolytic 3'-5' exoribonuclease that plays an important role in tRNA 3'-end maturation. Removes nucleotide residues following the 3'-CCA terminus of tRNAs; can also add nucleotides to the ends of RNA molecules by using nucleoside diphosphates as substrates, but this may not be physiologically important. Probably plays a role in initiation of 16S rRNA degradation (leading to ribosome degradation) during starvation. In Clostridium botulinum (strain Eklund 17B / Type B), this protein is Ribonuclease PH.